The primary structure comprises 108 residues: Nucleoid-associated protein Csal_1459 (108 aa).

A compositionally biased stretch (basic and acidic residues) spans 84-93; sequence EETSRGRMEE. Residues 84–108 form a disordered region; it reads EETSRGRMEEATEGMNLPPGFKMPF.

The protein belongs to the YbaB/EbfC family. In terms of assembly, homodimer.

The protein resides in the cytoplasm. Its subcellular location is the nucleoid. In terms of biological role, binds to DNA and alters its conformation. May be involved in regulation of gene expression, nucleoid organization and DNA protection. In Chromohalobacter salexigens (strain ATCC BAA-138 / DSM 3043 / CIP 106854 / NCIMB 13768 / 1H11), this protein is Nucleoid-associated protein Csal_1459.